The chain runs to 495 residues: UDP-glycosyltransferase 73C12 (495 aa).

H24 functions as the Proton acceptor in the catalytic mechanism. Residue H24 participates in an anthocyanidin binding. D129 functions as the Charge relay in the catalytic mechanism. A356, Q358, H373, W376, N377, S378, and E381 together coordinate UDP-alpha-D-glucose. Residue A396 coordinates an anthocyanidin. The UDP-alpha-D-glucose site is built by D397 and Q398.

It belongs to the UDP-glycosyltransferase family.

It carries out the reaction oleanolate + UDP-alpha-D-glucose = oleanolate 3-O-beta-D-glucoside + UDP + H(+). Functionally, catalyzes the transfer of a glucose (Glc) moiety from UDP-Glc to the C-3 position of the oleanane sapogenins oleanolate and hederagenin, and to the C-28 carboxylic group of the lupane sapogenin betulinate. The monoglucosylated hederagenin 3-O-beta-D-glucoside is a feeding deterrent of the yellow-striped flea beetle (Phyllotreta nemorum). The protein is UDP-glycosyltransferase 73C12 of Barbarea vulgaris (Yellow rocket).